The primary structure comprises 1040 residues: Multidrug resistance protein MdtB (1040 aa).

The next 12 helical transmembrane spans lie at leucine 25 to alanine 45, leucine 347 to alanine 367, isoleucine 369 to leucine 389, leucine 396 to isoleucine 416, isoleucine 440 to phenylalanine 460, phenylalanine 472 to proline 492, tryptophan 537 to isoleucine 557, leucine 869 to isoleucine 889, histidine 890 to methionine 910, isoleucine 911 to valine 931, isoleucine 968 to valine 988, and isoleucine 998 to isoleucine 1018.

This sequence belongs to the resistance-nodulation-cell division (RND) (TC 2.A.6) family. MdtB subfamily. As to quaternary structure, part of a tripartite efflux system composed of MdtA, MdtB and MdtC. MdtB forms a heteromultimer with MdtC.

The protein resides in the cell inner membrane. The polypeptide is Multidrug resistance protein MdtB (Salmonella arizonae (strain ATCC BAA-731 / CDC346-86 / RSK2980)).